Reading from the N-terminus, the 84-residue chain is MKQEIKKDDISGLSFEEALKQLEVIVENLERGDVPLEQSIDIYERGEALKNHCDKLLKVAEAKIEKIQLSNNGTPEGVKPLDPE.

It belongs to the XseB family. As to quaternary structure, heterooligomer composed of large and small subunits.

It is found in the cytoplasm. It catalyses the reaction Exonucleolytic cleavage in either 5'- to 3'- or 3'- to 5'-direction to yield nucleoside 5'-phosphates.. In terms of biological role, bidirectionally degrades single-stranded DNA into large acid-insoluble oligonucleotides, which are then degraded further into small acid-soluble oligonucleotides. The chain is Exodeoxyribonuclease 7 small subunit from Bartonella bacilliformis (strain ATCC 35685 / KC583 / Herrer 020/F12,63).